The primary structure comprises 200 residues: V-type proton ATPase subunit E (200 aa).

It belongs to the V-ATPase E subunit family.

Produces ATP from ADP in the presence of a proton gradient across the membrane. This Thermoanaerobacter pseudethanolicus (strain ATCC 33223 / 39E) (Clostridium thermohydrosulfuricum) protein is V-type proton ATPase subunit E.